The chain runs to 142 residues: Large ribosomal subunit protein uL11 (142 aa).

Belongs to the universal ribosomal protein uL11 family. In terms of assembly, part of the ribosomal stalk of the 50S ribosomal subunit. Interacts with L10 and the large rRNA to form the base of the stalk. L10 forms an elongated spine to which L12 dimers bind in a sequential fashion forming a multimeric L10(L12)X complex. Post-translationally, one or more lysine residues are methylated.

In terms of biological role, forms part of the ribosomal stalk which helps the ribosome interact with GTP-bound translation factors. The polypeptide is Large ribosomal subunit protein uL11 (Mycobacterium ulcerans (strain Agy99)).